The chain runs to 430 residues: NADH-quinone oxidoreductase subunit D 1 (430 aa).

The disordered stretch occupies residues 1–36; it reads MSEAKGVGGIDPRATPGSAGAGERPPMGTVSRAGDG.

The protein belongs to the complex I 49 kDa subunit family. NDH-1 is composed of 14 different subunits. Subunits NuoB, C, D, E, F, and G constitute the peripheral sector of the complex.

Its subcellular location is the cell inner membrane. The catalysed reaction is a quinone + NADH + 5 H(+)(in) = a quinol + NAD(+) + 4 H(+)(out). NDH-1 shuttles electrons from NADH, via FMN and iron-sulfur (Fe-S) centers, to quinones in the respiratory chain. The immediate electron acceptor for the enzyme in this species is believed to be ubiquinone. Couples the redox reaction to proton translocation (for every two electrons transferred, four hydrogen ions are translocated across the cytoplasmic membrane), and thus conserves the redox energy in a proton gradient. This Anaeromyxobacter dehalogenans (strain 2CP-C) protein is NADH-quinone oxidoreductase subunit D 1.